Reading from the N-terminus, the 503-residue chain is AMP phosphorylase (503 aa).

Residues G168, 194–199, and T203 contribute to the AMP site; that span reads SRAITS. D256 serves as the catalytic Proton donor. The AMP site is built by S264 and K288.

The protein belongs to the thymidine/pyrimidine-nucleoside phosphorylase family. Type 2 subfamily.

The enzyme catalyses AMP + phosphate = alpha-D-ribose 1,5-bisphosphate + adenine. It carries out the reaction CMP + phosphate = cytosine + alpha-D-ribose 1,5-bisphosphate. It catalyses the reaction UMP + phosphate = alpha-D-ribose 1,5-bisphosphate + uracil. Functionally, catalyzes the conversion of AMP and phosphate to adenine and ribose 1,5-bisphosphate (R15P). Exhibits phosphorylase activity toward CMP and UMP in addition to AMP. Functions in an archaeal AMP degradation pathway, together with R15P isomerase and RubisCO. The chain is AMP phosphorylase (deoA) from Pyrococcus abyssi (strain GE5 / Orsay).